The chain runs to 205 residues: Inosine triphosphate pyrophosphatase (205 aa).

20–25 (TGNAKK) provides a ligand contact to ITP. Mg(2+) is bound at residue E48. ITP-binding positions include K60, 76–77 (DT), K93, 152–155 (FGWD), K175, and 180–181 (HR).

It belongs to the HAM1 NTPase family. In terms of assembly, homodimer. Mg(2+) serves as cofactor. Requires Mn(2+) as cofactor.

The protein localises to the cytoplasm. It catalyses the reaction ITP + H2O = IMP + diphosphate + H(+). The catalysed reaction is dITP + H2O = dIMP + diphosphate + H(+). The enzyme catalyses XTP + H2O = XMP + diphosphate + H(+). Its function is as follows. Pyrophosphatase that hydrolyzes non-canonical purine nucleotides such as inosine triphosphate (ITP), deoxyinosine triphosphate (dITP) or xanthosine 5'-triphosphate (XTP) to their respective monophosphate derivatives. The enzyme does not distinguish between the deoxy- and ribose forms. Probably excludes non-canonical purines from RNA and DNA precursor pools, thus preventing their incorporation into RNA and DNA and avoiding chromosomal lesions. This chain is Inosine triphosphate pyrophosphatase, found in Oryza sativa subsp. japonica (Rice).